Reading from the N-terminus, the 660-residue chain is Bifunctional polymyxin resistance protein ArnA (660 aa).

The formyltransferase ArnAFT stretch occupies residues 1 to 304 (MKAVIFAYHD…ALGLVKGALL (304 aa)). The active-site Proton donor; for formyltransferase activity is H104. Residues R114 and 136–140 (TARAD) contribute to the (6R)-10-formyltetrahydrofolate site. The tract at residues 314–660 (RRTRVLILGV…QTVDLPDAAQ (347 aa)) is dehydrogenase ArnADH. Residues D347 and 368-369 (DI) each bind NAD(+). Residues A393, Y398, and 432-433 (TS) contribute to the UDP-alpha-D-glucuronate site. E434 (proton acceptor; for decarboxylase activity) is an active-site residue. Residues R460, N492, 526 to 535 (KLVDGGAQKR), and Y613 each bind UDP-alpha-D-glucuronate. The active-site Proton donor; for decarboxylase activity is the R619.

The protein in the N-terminal section; belongs to the Fmt family. UDP-L-Ara4N formyltransferase subfamily. This sequence in the C-terminal section; belongs to the NAD(P)-dependent epimerase/dehydratase family. UDP-glucuronic acid decarboxylase subfamily. Homohexamer, formed by a dimer of trimers.

It catalyses the reaction UDP-alpha-D-glucuronate + NAD(+) = UDP-beta-L-threo-pentopyranos-4-ulose + CO2 + NADH. It carries out the reaction UDP-4-amino-4-deoxy-beta-L-arabinose + (6R)-10-formyltetrahydrofolate = UDP-4-deoxy-4-formamido-beta-L-arabinose + (6S)-5,6,7,8-tetrahydrofolate + H(+). It participates in nucleotide-sugar biosynthesis; UDP-4-deoxy-4-formamido-beta-L-arabinose biosynthesis; UDP-4-deoxy-4-formamido-beta-L-arabinose from UDP-alpha-D-glucuronate: step 1/3. Its pathway is nucleotide-sugar biosynthesis; UDP-4-deoxy-4-formamido-beta-L-arabinose biosynthesis; UDP-4-deoxy-4-formamido-beta-L-arabinose from UDP-alpha-D-glucuronate: step 3/3. It functions in the pathway bacterial outer membrane biogenesis; lipopolysaccharide biosynthesis. Bifunctional enzyme that catalyzes the oxidative decarboxylation of UDP-glucuronic acid (UDP-GlcUA) to UDP-4-keto-arabinose (UDP-Ara4O) and the addition of a formyl group to UDP-4-amino-4-deoxy-L-arabinose (UDP-L-Ara4N) to form UDP-L-4-formamido-arabinose (UDP-L-Ara4FN). The modified arabinose is attached to lipid A and is required for resistance to polymyxin and cationic antimicrobial peptides. This Sodalis glossinidius (strain morsitans) protein is Bifunctional polymyxin resistance protein ArnA.